The primary structure comprises 354 residues: Uroporphyrinogen decarboxylase (354 aa).

Residues 27 to 31 (RQAGR), Phe46, Asp77, Tyr154, Thr209, and His327 each bind substrate.

The protein belongs to the uroporphyrinogen decarboxylase family. In terms of assembly, homodimer.

The protein localises to the cytoplasm. The catalysed reaction is uroporphyrinogen III + 4 H(+) = coproporphyrinogen III + 4 CO2. It functions in the pathway porphyrin-containing compound metabolism; protoporphyrin-IX biosynthesis; coproporphyrinogen-III from 5-aminolevulinate: step 4/4. Catalyzes the decarboxylation of four acetate groups of uroporphyrinogen-III to yield coproporphyrinogen-III. The chain is Uroporphyrinogen decarboxylase from Pseudomonas putida (strain ATCC 47054 / DSM 6125 / CFBP 8728 / NCIMB 11950 / KT2440).